Here is a 238-residue protein sequence, read N- to C-terminus: Small ribosomal subunit protein uS2c (238 aa).

This sequence belongs to the universal ribosomal protein uS2 family.

The protein localises to the plastid. It is found in the chloroplast. The protein is Small ribosomal subunit protein uS2c (rps2) of Oltmannsiellopsis viridis (Marine flagellate).